We begin with the raw amino-acid sequence, 477 residues long: Lactate utilization protein B (477 aa).

2 4Fe-4S ferredoxin-type domains span residues 304–334 (GTEF…GHSY) and 353–382 (YDDY…LHEL). Cysteine 313, cysteine 316, cysteine 319, cysteine 323, cysteine 366, cysteine 369, and cysteine 373 together coordinate [4Fe-4S] cluster. The tract at residues 433–477 (KEDGKITKGPGPLKQWTQIRDFPAPNKSRFRDWFEDRRKEKGEDK) is disordered. Residues 461–477 (RFRDWFEDRRKEKGEDK) are compositionally biased toward basic and acidic residues.

Belongs to the LutB/YkgF family.

Its function is as follows. Is involved in L-lactate degradation and allows cells to grow with lactate as the sole carbon source. Has probably a role as an electron transporter during oxidation of L-lactate. The sequence is that of Lactate utilization protein B from Bacillus licheniformis (strain ATCC 14580 / DSM 13 / JCM 2505 / CCUG 7422 / NBRC 12200 / NCIMB 9375 / NCTC 10341 / NRRL NRS-1264 / Gibson 46).